We begin with the raw amino-acid sequence, 977 residues long: Synaptonemal complex protein 2-like (977 aa).

Disordered regions lie at residues 447-474 (LGSQ…LSNA), 574-593 (QSTE…NSPL), 642-728 (RNKS…QDIM), and 804-824 (TEKN…VFYS). Low complexity predominate over residues 449–462 (SQTSEHSSTTKTSS). The span at 463 to 474 (ANRSVQKSLSNA) shows a compositional bias: polar residues. Residues 674–693 (SRKEMHRPEDINPKSPHSAE) are compositionally biased toward basic and acidic residues.

It belongs to the SYCP2 family. Ubiquitinated and gradually degraded by the proteasome during oocyte maturation. In terms of processing, phosphorylated in maturing oocytes, before its degradation. As to expression, expressed in immature oocytes (at protein level). Expressed in the ovary.

Its subcellular location is the nucleus. The protein localises to the chromosome. The protein resides in the centromere. It is found in the nucleolus. Oocyte-specific protein that localizes to centromeres at the dictyate stage and regulates the survival of primordial oocytes. In Xenopus laevis (African clawed frog), this protein is Synaptonemal complex protein 2-like (sycp2l).